Reading from the N-terminus, the 852-residue chain is Probable LRR receptor-like serine/threonine-protein kinase At1g05700 (852 aa).

Residues 1–25 form the signal peptide; that stretch reads MEEFRFLYLIYSAAFALCLVVSVLA. At 26 to 510 the chain is on the extracellular side; sequence QDQSGFISID…SCRKSNSKKL (485 aa). Asparagine 138, asparagine 182, asparagine 231, asparagine 240, asparagine 258, asparagine 293, asparagine 400, asparagine 415, and asparagine 431 each carry an N-linked (GlcNAc...) asparagine glycan. LRR repeat units lie at residues 410 to 432, 434 to 457, and 458 to 479; these read RITS…FSNL, MIQE…SKLK, and FLRV…ELLE. Residue asparagine 466 is glycosylated (N-linked (GlcNAc...) asparagine). Residues 511–531 traverse the membrane as a helical segment; the sequence is VIPLVASFAALFILLLLSGVF. The Cytoplasmic portion of the chain corresponds to 532 to 852; sequence WRIRNRRNKS…LQREESNKNY (321 aa). Threonine 561 is subject to Phosphothreonine. Residues 570–843 enclose the Protein kinase domain; sequence NNFGQVLGKG…HIVRGLNECL (274 aa). ATP contacts are provided by residues 576 to 584 and lysine 597; that span reads LGKGGFGTV. Position 642 is a phosphotyrosine (tyrosine 642). Aspartate 693 acts as the Proton acceptor in catalysis. Serine 697 and serine 727 each carry phosphoserine. Residues threonine 728 and threonine 733 each carry the phosphothreonine modification.

The protein belongs to the protein kinase superfamily. Ser/Thr protein kinase family.

Its subcellular location is the membrane. The enzyme catalyses L-seryl-[protein] + ATP = O-phospho-L-seryl-[protein] + ADP + H(+). It carries out the reaction L-threonyl-[protein] + ATP = O-phospho-L-threonyl-[protein] + ADP + H(+). The chain is Probable LRR receptor-like serine/threonine-protein kinase At1g05700 from Arabidopsis thaliana (Mouse-ear cress).